Consider the following 109-residue polypeptide: uncharacterized protein (109 aa).

A signal peptide spans 1-19; that stretch reads MKKFALLAGLFVFAPMTWA.

This is an uncharacterized protein from Escherichia coli O6:H1 (strain CFT073 / ATCC 700928 / UPEC).